Here is a 208-residue protein sequence, read N- to C-terminus: FMN-dependent NADH:quinone oxidoreductase (208 aa).

Residues Ser10, 16–18, and 96–99 contribute to the FMN site; these read SRS and MYNF.

It belongs to the azoreductase type 1 family. In terms of assembly, homodimer. The cofactor is FMN.

The catalysed reaction is 2 a quinone + NADH + H(+) = 2 a 1,4-benzosemiquinone + NAD(+). The enzyme catalyses N,N-dimethyl-1,4-phenylenediamine + anthranilate + 2 NAD(+) = 2-(4-dimethylaminophenyl)diazenylbenzoate + 2 NADH + 2 H(+). Its function is as follows. Quinone reductase that provides resistance to thiol-specific stress caused by electrophilic quinones. In terms of biological role, also exhibits azoreductase activity. Catalyzes the reductive cleavage of the azo bond in aromatic azo compounds to the corresponding amines. In Xanthobacter autotrophicus (strain ATCC BAA-1158 / Py2), this protein is FMN-dependent NADH:quinone oxidoreductase.